Consider the following 528-residue polypeptide: Tyrosine--tRNA ligase, cytoplasmic (528 aa).

Y39 lines the L-tyrosine pocket. Residues 44 to 52 carry the 'HIGH' region motif; sequence TTGKPHVAY. L-tyrosine-binding residues include Y166, Q170, D173, and Q188. A 'KMSKS' region motif is present at residues 222–226; it reads KMSSS. The Nuclear localization signal motif lies at 242 to 247; it reads KKKLKK. Residues 332-362 are disordered; it reads EMKKLSNDAYPDASKQKSVPKGSTKNSGTEE. Residues 364 to 468 form the tRNA-binding domain; that stretch reads DPSLLDLRVG…SGSAPGERIY (105 aa).

The protein belongs to the class-I aminoacyl-tRNA synthetase family. In terms of assembly, homodimer.

It localises to the cytoplasm. Its subcellular location is the nucleus. It carries out the reaction tRNA(Tyr) + L-tyrosine + ATP = L-tyrosyl-tRNA(Tyr) + AMP + diphosphate + H(+). Catalyzes the attachment of tyrosine to tRNA(Tyr) in a two-step reaction: tyrosine is first activated by ATP to form Tyr-AMP and then transferred to the acceptor end of tRNA(Tyr). This Xenopus laevis (African clawed frog) protein is Tyrosine--tRNA ligase, cytoplasmic (yars1).